Here is a 92-residue protein sequence, read N- to C-terminus: MARSLKKGPFVADKLMKKIELLHSKGEKTVIQTWSRSSTITPIMIGHTIAVHNGREHIPVFVTDQMVGHKLGEFSPTRTFRGHVKSDKKSKR.

The protein belongs to the universal ribosomal protein uS19 family.

The protein resides in the plastid. Its subcellular location is the chloroplast. Protein S19 forms a complex with S13 that binds strongly to the 16S ribosomal RNA. The chain is Small ribosomal subunit protein uS19c from Ostreococcus tauri.